The following is a 315-amino-acid chain: Methionyl-tRNA formyltransferase (315 aa).

113–116 contributes to the (6S)-5,6,7,8-tetrahydrofolate binding site; that stretch reads SLLP.

The protein belongs to the Fmt family.

It catalyses the reaction L-methionyl-tRNA(fMet) + (6R)-10-formyltetrahydrofolate = N-formyl-L-methionyl-tRNA(fMet) + (6S)-5,6,7,8-tetrahydrofolate + H(+). Attaches a formyl group to the free amino group of methionyl-tRNA(fMet). The formyl group appears to play a dual role in the initiator identity of N-formylmethionyl-tRNA by promoting its recognition by IF2 and preventing the misappropriation of this tRNA by the elongation apparatus. The sequence is that of Methionyl-tRNA formyltransferase from Cronobacter sakazakii (strain ATCC BAA-894) (Enterobacter sakazakii).